Here is a 76-residue protein sequence, read N- to C-terminus: MRTFALLTAMLLLVALQPQAEARQARADEAAAQQQPGADDQGMAHSFTRPENAALPLSESAKGLRCVCRRGVCQLL.

Positions 1–22 (MRTFALLTAMLLLVALQPQAEA) are cleaved as a signal peptide. Residues 23–64 (RQARADEAAAQQQPGADDQGMAHSFTRPENAALPLSESAKGL) constitute a propeptide that is removed on maturation. The interval 24–54 (QARADEAAAQQQPGADDQGMAHSFTRPENAA) is disordered. Low complexity predominate over residues 30–44 (AAAQQQPGADDQGMA). Arg-65 is covalently cross-linked (Cyclopeptide (Arg-Cys) (interchain with C-73 in subunit A); in form BTD-1). A Cyclopeptide (Arg-Cys) (interchain with C-73 in subunit B); in form BTD-2 cross-link involves residue Arg-65. Cys-68 and Cys-73 form a disulfide bridge. Cys-73 participates in a covalent cross-link: Cyclopeptide (Cys-Arg) (interchain with R-65 in subunit A); in form BTD-1. Residue Cys-73 forms a Cyclopeptide (Cys-Arg) (interchain with R-65 in subunit B); in form BTD-2 linkage. The propeptide occupies 74–76 (QLL).

It belongs to the alpha-defensin family. Theta subfamily. In terms of assembly, BTD-1 is a cyclic heterodimer composed of subunits A and B; disulfide-linked. BTD-2 is a cyclic homodimer composed of two subunits B; disulfide-linked. Post-translationally, forms a cyclic peptide with subunit A (BTD-1), or subunit B (BTD-2). An additional intersubunit disulfide bond is formed.

BTD-1 and BTD-2 have antimicrobial activity against the Gram-negative bacterium E.coli ML35, the Gram-positive bacterium S.aureus 502a, and the fungus C.albicans 16820. BTD-2 is more effective against E.coli than BTD-1. This Papio anubis (Olive baboon) protein is Theta defensin subunit B (BTDB).